A 1325-amino-acid chain; its full sequence is uncharacterized protein (1325 aa).

An N-terminal signal peptide occupies residues 1–27; sequence MHTFTRKVKWPFMFTAIGLTFGIVAVA. A lipid anchor (N-palmitoyl cysteine) is attached at cysteine 28. Cysteine 28 is lipidated: S-diacylglycerol cysteine. Disordered regions lie at residues 379 to 402 and 430 to 464; these read RAASSSSEGTIQLKTASDGGGTTQ and NTNANQTGGGGSGGGGGTSTGSSTGSSTETTTGNS. Residues 436–448 are compositionally biased toward gly residues; sequence TGGGGSGGGGGTS. Low complexity predominate over residues 449-464; that stretch reads TGSSTGSSTETTTGNS.

Belongs to the MG307/MG309/MG338 family.

The protein localises to the cell membrane. This is an uncharacterized protein from Mycoplasma pneumoniae (strain ATCC 29342 / M129 / Subtype 1) (Mycoplasmoides pneumoniae).